The primary structure comprises 723 residues: Polyribonucleotide nucleotidyltransferase (723 aa).

Residues Asp488 and Asp494 each contribute to the Mg(2+) site. One can recognise a KH domain in the interval 555–614; it reads PRMITMKIHPDKIREVIGKGGSTIQALTKETGTTIDIQEDGTITIASTSTDGMAEAKRRI. The S1 motif domain maps to 624–692; sequence GKIYAGTVLK…EKGRLRLSLK (69 aa). Positions 701–723 are disordered; it reads SISPINAGEAAAPAAPAEGSEQQ. Positions 707-723 are enriched in low complexity; the sequence is AGEAAAPAAPAEGSEQQ.

It belongs to the polyribonucleotide nucleotidyltransferase family. Mg(2+) serves as cofactor.

It localises to the cytoplasm. The catalysed reaction is RNA(n+1) + phosphate = RNA(n) + a ribonucleoside 5'-diphosphate. Involved in mRNA degradation. Catalyzes the phosphorolysis of single-stranded polyribonucleotides processively in the 3'- to 5'-direction. The sequence is that of Polyribonucleotide nucleotidyltransferase from Cupriavidus necator (strain ATCC 17699 / DSM 428 / KCTC 22496 / NCIMB 10442 / H16 / Stanier 337) (Ralstonia eutropha).